The chain runs to 437 residues: Phosphomethylpyrimidine synthase (437 aa).

Substrate-binding positions include Asn-69, Met-98, Tyr-127, His-163, 185–187 (SRG), 226–229 (DACR), and Glu-265. His-269 lines the Zn(2+) pocket. Tyr-292 serves as a coordination point for substrate. Residue His-333 coordinates Zn(2+). Positions 409, 412, and 416 each coordinate [4Fe-4S] cluster.

It belongs to the ThiC family. It depends on [4Fe-4S] cluster as a cofactor.

It catalyses the reaction 5-amino-1-(5-phospho-beta-D-ribosyl)imidazole + S-adenosyl-L-methionine = 4-amino-2-methyl-5-(phosphooxymethyl)pyrimidine + CO + 5'-deoxyadenosine + formate + L-methionine + 3 H(+). It participates in cofactor biosynthesis; thiamine diphosphate biosynthesis. In terms of biological role, catalyzes the synthesis of the hydroxymethylpyrimidine phosphate (HMP-P) moiety of thiamine from aminoimidazole ribotide (AIR) in a radical S-adenosyl-L-methionine (SAM)-dependent reaction. The chain is Phosphomethylpyrimidine synthase from Clostridium botulinum (strain 657 / Type Ba4).